The chain runs to 328 residues: Probable voltage-gated potassium channel subunit beta (328 aa).

Positions 21, 27, and 49 each coordinate NADP(+). Residue tyrosine 54 is the Proton donor/acceptor of the active site. NADP(+)-binding residues include serine 152, glutamine 178, tryptophan 207, serine 208, proline 209, leucine 210, alanine 211, lysine 218, arginine 229, glycine 285, threonine 287, glutamine 291, glutamate 294, and asparagine 295.

The protein belongs to the shaker potassium channel beta subunit family. As to quaternary structure, forms heteromultimeric complexes with potassium channel alpha subunits. As to expression, expressed in late-developed leaves with the highest expression in the flag leaf (at protein level).

In terms of biological role, probable accessory potassium channel protein which modulates the activity of the pore-forming alpha subunit. In Oryza sativa subsp. japonica (Rice), this protein is Probable voltage-gated potassium channel subunit beta (KOB1).